Reading from the N-terminus, the 306-residue chain is Pseudouridine-5'-phosphate glycosidase (306 aa).

The active-site Proton donor is the Glu28. Substrate contacts are provided by Lys89 and Val109. A Mn(2+)-binding site is contributed by Asp139. 141 to 143 is a substrate binding site; that stretch reads SAD. Residue Lys160 is the Nucleophile of the active site.

Belongs to the pseudouridine-5'-phosphate glycosidase family. In terms of assembly, homotrimer. Requires Mn(2+) as cofactor.

The catalysed reaction is D-ribose 5-phosphate + uracil = psi-UMP + H2O. Functionally, catalyzes the reversible cleavage of pseudouridine 5'-phosphate (PsiMP) to ribose 5-phosphate and uracil. Functions biologically in the cleavage direction, as part of a pseudouridine degradation pathway. The chain is Pseudouridine-5'-phosphate glycosidase from Gemmatimonas aurantiaca (strain DSM 14586 / JCM 11422 / NBRC 100505 / T-27).